The primary structure comprises 84 residues: Cell division topological specificity factor (84 aa).

Belongs to the MinE family.

In terms of biological role, prevents the cell division inhibition by proteins MinC and MinD at internal division sites while permitting inhibition at polar sites. This ensures cell division at the proper site by restricting the formation of a division septum at the midpoint of the long axis of the cell. The chain is Cell division topological specificity factor from Pseudomonas fluorescens (strain ATCC BAA-477 / NRRL B-23932 / Pf-5).